A 429-amino-acid polypeptide reads, in one-letter code: Ribosomal RNA small subunit methyltransferase B (429 aa).

S-adenosyl-L-methionine is bound by residues 254-260 (CAAPGGK), D277, D303, and D322. Catalysis depends on C375, which acts as the Nucleophile.

It belongs to the class I-like SAM-binding methyltransferase superfamily. RsmB/NOP family.

It is found in the cytoplasm. It carries out the reaction cytidine(967) in 16S rRNA + S-adenosyl-L-methionine = 5-methylcytidine(967) in 16S rRNA + S-adenosyl-L-homocysteine + H(+). In terms of biological role, specifically methylates the cytosine at position 967 (m5C967) of 16S rRNA. The chain is Ribosomal RNA small subunit methyltransferase B from Escherichia coli (strain SE11).